The chain runs to 170 residues: Thialysine N-epsilon-acetyltransferase (170 aa).

Residues 4 to 166 (TRIREARESD…FRFEGEAMRE (163 aa)) enclose the N-acetyltransferase domain. Residue 27-28 (FE) coordinates substrate. N6-acetyllysine is present on Lys-29. A substrate-binding site is contributed by Glu-92. Residues 94–96 (IYV), 102–107 (GQGIGT), 133–135 (NKK), and Tyr-140 each bind acetyl-CoA. Tyr-140 serves as the catalytic Proton donor. Glu-152 lines the substrate pocket.

Belongs to the acetyltransferase family. Homodimer.

It is found in the cytoplasm. It carries out the reaction S-(2-aminoethyl)-L-cysteine + acetyl-CoA = S-(2-acetamidoethyl)-L-cysteine + CoA + H(+). The enzyme catalyses an alkane-alpha,omega-diamine + acetyl-CoA = an N-acetylalkane-alpha,omega-diamine + CoA + H(+). In terms of biological role, catalyzes the N-acetylation of the amino acid thialysine (S-(2-aminoethyl)-L-cysteine), a L-lysine analog with the 4-methylene group substituted with a sulfur. May also catalyze acetylation of polyamines, such as norspermidine, spermidine or spermine. However, ability to acetylate polyamines is weak, suggesting that it does not act as a diamine acetyltransferase in vivo. The polypeptide is Thialysine N-epsilon-acetyltransferase (Mus musculus (Mouse)).